Here is a 181-residue protein sequence, read N- to C-terminus: UPF0397 protein str0306 (181 aa).

5 helical membrane-spanning segments follow: residues 11 to 31, 45 to 65, 72 to 92, 109 to 129, and 147 to 167; these read ATGIGAALFIIIGMFVNIPIF, LFSVIFGPITGFFMGFIGHAL, GNISWAWVLASGITGLVIGLF, IWFNLAQALGLLIAYGVVTPI, and FVAGVANFITIAIGGTLLLAI.

Belongs to the UPF0397 family.

It is found in the cell membrane. In Streptococcus thermophilus (strain CNRZ 1066), this protein is UPF0397 protein str0306.